Consider the following 796-residue polypeptide: Kinesin-like protein KIF3C (796 aa).

Positions 10–367 (ALKVVARCRP…LRFANRAKNI (358 aa)) constitute a Kinesin motor domain. Position 97 to 104 (97 to 104 (GQTGTGKT)) interacts with ATP. Disordered regions lie at residues 251 to 292 (ERQN…PKEA), 397 to 421 (EKKGMLGKRPRRKSSRRKKAVSAPA), and 754 to 796 (PSTS…VDHD). The segment covering 270–284 (AGGGGGGGGTSGSGS) has biased composition (gly residues). A coiled-coil region spans residues 378–632 (KDTLLREFQE…NEQTRELKLK (255 aa)). The span at 401–416 (MLGKRPRRKSSRRKKA) shows a compositional bias: basic residues. Positions 633–793 (YLIIENFIPP…SAPLHPATVV (161 aa)) are globular.

This sequence belongs to the TRAFAC class myosin-kinesin ATPase superfamily. Kinesin family. Kinesin II subfamily. In terms of assembly, heterodimer of KIF3A and KIF3C.

Its subcellular location is the cytoplasm. It is found in the cytoskeleton. In terms of biological role, microtubule-based anterograde translocator for membranous organelles. The chain is Kinesin-like protein KIF3C (Kif3c) from Rattus norvegicus (Rat).